A 306-amino-acid polypeptide reads, in one-letter code: Glutaminase (306 aa).

Substrate contacts are provided by serine 64, asparagine 115, glutamate 159, asparagine 166, tyrosine 190, tyrosine 242, and valine 260.

It belongs to the glutaminase family. In terms of assembly, homotetramer.

It catalyses the reaction L-glutamine + H2O = L-glutamate + NH4(+). In Vibrio cholerae serotype O1 (strain ATCC 39315 / El Tor Inaba N16961), this protein is Glutaminase.